Reading from the N-terminus, the 426-residue chain is 3-phosphoshikimate 1-carboxyvinyltransferase (426 aa).

Residues Lys22, Ser23, and Arg27 each coordinate 3-phosphoshikimate. Lys22 is a phosphoenolpyruvate binding site. Gly96 and Arg124 together coordinate phosphoenolpyruvate. Positions 170, 171, 172, 198, 314, 337, and 341 each coordinate 3-phosphoshikimate. Residue Gln172 participates in phosphoenolpyruvate binding. The active-site Proton acceptor is Asp314. 3 residues coordinate phosphoenolpyruvate: Arg345, Arg387, and Lys412.

The protein belongs to the EPSP synthase family. As to quaternary structure, monomer.

Its subcellular location is the cytoplasm. It catalyses the reaction 3-phosphoshikimate + phosphoenolpyruvate = 5-O-(1-carboxyvinyl)-3-phosphoshikimate + phosphate. The protein operates within metabolic intermediate biosynthesis; chorismate biosynthesis; chorismate from D-erythrose 4-phosphate and phosphoenolpyruvate: step 6/7. Catalyzes the transfer of the enolpyruvyl moiety of phosphoenolpyruvate (PEP) to the 5-hydroxyl of shikimate-3-phosphate (S3P) to produce enolpyruvyl shikimate-3-phosphate and inorganic phosphate. This is 3-phosphoshikimate 1-carboxyvinyltransferase from Shewanella baltica (strain OS185).